A 691-amino-acid polypeptide reads, in one-letter code: Elongation factor G (691 aa).

The tr-type G domain occupies Glu-8–Val-282. Residues Ala-17–Thr-24, Asp-81–His-85, and Asn-135–Asp-138 contribute to the GTP site.

It belongs to the TRAFAC class translation factor GTPase superfamily. Classic translation factor GTPase family. EF-G/EF-2 subfamily.

It is found in the cytoplasm. In terms of biological role, catalyzes the GTP-dependent ribosomal translocation step during translation elongation. During this step, the ribosome changes from the pre-translocational (PRE) to the post-translocational (POST) state as the newly formed A-site-bound peptidyl-tRNA and P-site-bound deacylated tRNA move to the P and E sites, respectively. Catalyzes the coordinated movement of the two tRNA molecules, the mRNA and conformational changes in the ribosome. The chain is Elongation factor G from Prochlorococcus marinus (strain MIT 9303).